The following is a 122-amino-acid chain: uncharacterized protein (122 aa).

This is an uncharacterized protein from Bacillus subtilis (strain 168).